The sequence spans 323 residues: Cyclin-H (323 aa).

Ser-5 is modified (phosphoserine; by CDK8). Ser-132 carries the post-translational modification Phosphoserine. The segment at 299–323 is disordered; it reads DDDYVPKKSKHEEEEWTDDDLVESL. Residues 302-311 are compositionally biased toward basic and acidic residues; sequence YVPKKSKHEE. Residues 312–323 show a composition bias toward acidic residues; sequence EEWTDDDLVESL. The residue at position 315 (Thr-315) is a Phosphothreonine. Ser-322 is modified (phosphoserine).

It belongs to the cyclin family. Cyclin C subfamily. In terms of assembly, associates primarily with CDK7 and MAT1 to form the CAK complex. CAK can further associate with the core-TFIIH to form the TFIIH basal transcription factor.

The protein resides in the nucleus. Functionally, regulates CDK7, the catalytic subunit of the CDK-activating kinase (CAK) enzymatic complex. CAK activates the cyclin-associated kinases CDK1, CDK2, CDK4 and CDK6 by threonine phosphorylation. CAK complexed to the core-TFIIH basal transcription factor activates RNA polymerase II by serine phosphorylation of the repetitive C-terminal domain (CTD) of its large subunit (POLR2A), allowing its escape from the promoter and elongation of the transcripts. Involved in cell cycle control and in RNA transcription by RNA polymerase II. Its expression and activity are constant throughout the cell cycle. In Macaca fascicularis (Crab-eating macaque), this protein is Cyclin-H (CCNH).